The primary structure comprises 346 residues: NADH-cytochrome b5 reductase 2 (346 aa).

The helical transmembrane segment at 28 to 50 (GGSNAALYAGLAAAAGAGAYYFL) threads the bilayer. The 106-residue stretch at 95-200 (QGFISLKLDS…KGPIPKYPWS (106 aa)) folds into the FAD-binding FR-type domain. An FAD-binding site is contributed by 203-238 (KHDHIALIAGGTGITPMYQLARAIFNNPADKTKVTL).

The protein belongs to the flavoprotein pyridine nucleotide cytochrome reductase family. FAD is required as a cofactor.

The protein localises to the mitochondrion outer membrane. It carries out the reaction 2 Fe(III)-[cytochrome b5] + NADH = 2 Fe(II)-[cytochrome b5] + NAD(+) + H(+). Its function is as follows. May mediate the reduction of outer membrane cytochrome b5. The polypeptide is NADH-cytochrome b5 reductase 2 (mcr1) (Botryotinia fuckeliana (strain B05.10) (Noble rot fungus)).